A 193-amino-acid polypeptide reads, in one-letter code: Recombination protein RecR (193 aa).

Residues 61 to 76 (CTSCNALSESEVCEIC) form a C4-type zinc finger. The 87-residue stretch at 84-170 (SQLCMVLHPR…TFTKIAQGVP (87 aa)) folds into the Toprim domain.

Belongs to the RecR family.

Its function is as follows. May play a role in DNA repair. It seems to be involved in an RecBC-independent recombinational process of DNA repair. It may act with RecF and RecO. This chain is Recombination protein RecR, found in Helicobacter pylori (strain HPAG1).